Reading from the N-terminus, the 638-residue chain is Acetolactate synthase 1, chloroplastic (638 aa).

The segment covering methionine 1–proline 19 has biased composition (low complexity). Positions methionine 1 to arginine 23 are disordered. Residues methionine 1–arginine 39 constitute a chloroplast transit peptide. Glutamate 112 contacts thiamine diphosphate. An intrachain disulfide couples cysteine 132 to cysteine 278. FAD is bound by residues arginine 214, histidine 320–arginine 341, and aspartate 363–aspartate 382. The interval glutamine 455–histidine 535 is thiamine pyrophosphate binding. Aspartate 506 and asparagine 533 together coordinate Mg(2+).

It belongs to the TPP enzyme family. Mg(2+) serves as cofactor. It depends on thiamine diphosphate as a cofactor.

It is found in the plastid. The protein localises to the chloroplast. The catalysed reaction is 2 pyruvate + H(+) = (2S)-2-acetolactate + CO2. The protein operates within amino-acid biosynthesis; L-isoleucine biosynthesis; L-isoleucine from 2-oxobutanoate: step 1/4. It participates in amino-acid biosynthesis; L-valine biosynthesis; L-valine from pyruvate: step 1/4. The sequence is that of Acetolactate synthase 1, chloroplastic (ALS1) from Zea mays (Maize).